A 507-amino-acid chain; its full sequence is 3-octaprenyl-4-hydroxybenzoate carboxy-lyase (507 aa).

Asn177 contributes to the Mn(2+) binding site. Residues 180 to 182 (IYR), 194 to 196 (RWL), and 199 to 200 (RG) contribute to the prenylated FMN site. Mn(2+) is bound at residue Glu243. Asp302 serves as the catalytic Proton donor.

This sequence belongs to the UbiD family. In terms of assembly, homohexamer. Prenylated FMN serves as cofactor. Mn(2+) is required as a cofactor.

The protein localises to the cell membrane. The enzyme catalyses a 4-hydroxy-3-(all-trans-polyprenyl)benzoate + H(+) = a 2-(all-trans-polyprenyl)phenol + CO2. It participates in cofactor biosynthesis; ubiquinone biosynthesis. Functionally, catalyzes the decarboxylation of 3-octaprenyl-4-hydroxy benzoate to 2-octaprenylphenol, an intermediate step in ubiquinone biosynthesis. The polypeptide is 3-octaprenyl-4-hydroxybenzoate carboxy-lyase (Cupriavidus metallidurans (strain ATCC 43123 / DSM 2839 / NBRC 102507 / CH34) (Ralstonia metallidurans)).